The sequence spans 258 residues: Small ribosomal subunit protein mS40 (258 aa).

The transit peptide at 1–35 (MAASVLNVLLRRLPYFSPFRGAYGVQVPLQTLCTK) directs the protein to the mitochondrion. Serine 49 is subject to Phosphoserine. Residues 221 to 258 (QGHLREESGPPPESMPKVPLTAPNEATSTEQAGPQSAL) form a disordered region. The span at 244 to 258 (NEATSTEQAGPQSAL) shows a compositional bias: polar residues.

It belongs to the bacterial ribosomal protein bS18 family. Mitochondrion-specific ribosomal protein mS40 subfamily. As to quaternary structure, component of the mitochondrial ribosome small subunit (28S) which comprises a 12S rRNA and about 30 distinct proteins.

The protein localises to the mitochondrion. The polypeptide is Small ribosomal subunit protein mS40 (Bos taurus (Bovine)).